The sequence spans 263 residues: MSEEKRKQHFVLVHGSCHGAWCWYKVKPLLEAVGHRVTAVDLAASGIDTTRSITDIPTCEQYSEPLTKLLTSLPNDEKVVLVGHSFGGLNLAIAMEKFPEKISVAVFLTAFMPDTEHSPSFVLDKFGSNMPQEAWMGTEFEPYGSDNSGLSMFFSPDFMKLGLYQLSPVEDLELGLLLMRPGSLFINDLSKMKNFSDEGYGSVPRVFIVCKEDKAIPEERQRWMIDNFPVNLVMEMEETDHMPMFCKPQQLSDYFLKIADKFV.

Ser-85 functions as the Acyl-ester intermediate in the catalytic mechanism. Catalysis depends on charge relay system residues Asp-213 and His-241.

Belongs to the AB hydrolase superfamily. Methylesterase family.

It catalyses the reaction methyl (indol-3-yl)acetate + H2O = (indol-3-yl)acetate + methanol + H(+). The catalysed reaction is methyl (-)-jasmonate + H2O = jasmonate + methanol + H(+). It carries out the reaction methyl salicylate + H2O = salicylate + methanol + H(+). Its pathway is plant hormone biosynthesis. The protein operates within lipid metabolism; oxylipin biosynthesis. Esterase activity is down-regulated by salicylic acid (SA). In terms of biological role, methylesterase shown to have carboxylesterase activity, methyl indole-3-acetic acid (MeIAA) esterase activity, methyl salicylate (MeSA) esterase activity and methyl jasmonate (MeJA) esterase activity in vitro. Required to convert methyl salicylate (MeSA) to salicylic acid (SA) as part of the signal transduction pathways that activate systemic acquired resistance in systemic tissue. MeSA is believed to be an inactive form that needs to be demethylated to exert a biological effect. The protein is Methylesterase 1 of Arabidopsis thaliana (Mouse-ear cress).